Consider the following 874-residue polypeptide: Coatomer subunit gamma-1 (874 aa).

Over residues 1-11 (MLKKFDKKDEE) the composition is skewed to basic and acidic residues. The segment at 1–21 (MLKKFDKKDEESGGGSNPFQH) is disordered. 4 HEAT repeats span residues 64–101 (TEAT…IAED), 283–320 (KELA…KHPS), 322–355 (VTAC…GSES), and 356–392 (SIDR…KYPR). T594 is subject to Phosphothreonine. Residues 609–874 (RQEIFQEQLA…PVDIILASVG (266 aa)) are interaction with ZNF289/ARFGAP2.

Belongs to the COPG family. Oligomeric complex that consists of at least the alpha, beta, beta', gamma, delta, epsilon and zeta subunits. Interacts with ZNF289/ARFGAP2 through its C-terminal appendage domain. Interacts with EGFR upon EGF treatment; interaction is essential for regulation of EGF-dependent nuclear transport of EGFR by retrograde trafficking from the Golgi to the ER. The coatomer interacts with KDEL receptors; the interaction is important for retrograde trafficking of KDEL-bearing proteins from the Golgi to the endoplasmic reticulum. Interacts with COPB1. Interacts with TMED10 (via C-terminus). Interacts with TMED2, TMED3, TMED7 and TMED9.

The protein resides in the cytoplasm. It localises to the golgi apparatus membrane. It is found in the cytoplasmic vesicle. Its subcellular location is the COPI-coated vesicle membrane. The coatomer is a cytosolic protein complex that binds to dilysine motifs and reversibly associates with Golgi non-clathrin-coated vesicles, which further mediate biosynthetic protein transport from the ER, via the Golgi up to the trans Golgi network. Coatomer complex is required for budding from Golgi membranes, and is essential for the retrograde Golgi-to-ER transport of dilysine-tagged proteins. In mammals, the coatomer can only be recruited by membranes associated to ADP-ribosylation factors (ARFs), which are small GTP-binding proteins; the complex also influences the Golgi structural integrity, as well as the processing, activity, and endocytic recycling of LDL receptors. Required for limiting lipid storage in lipid droplets. Involved in lipid homeostasis by regulating the presence of perilipin family members PLIN2 and PLIN3 at the lipid droplet surface and promoting the association of adipocyte triglyceride lipase (PNPLA2) with the lipid droplet surface to mediate lipolysis. The protein is Coatomer subunit gamma-1 (COPG1) of Homo sapiens (Human).